Reading from the N-terminus, the 525-residue chain is Probable pectinesterase/pectinesterase inhibitor 44 (525 aa).

The first 19 residues, 1 to 19, serve as a signal peptide directing secretion; it reads MSCLKYFLILLMLGLCVSS. The segment at 30-153 is pectinesterase inhibitor 44; sequence VPASEFVSSI…YSMLRELLPL (124 aa). Residue N98 is glycosylated (N-linked (GlcNAc...) asparagine). The interval 157–192 is disordered; that stretch reads EQKPKAVSKPGPIAKGPKAPPGRKLRDTDEDESLQF. Residues 212–509 are pectinesterase 44; the sequence is DVSVALDGTG…FTVSQFIKGN (298 aa). N-linked (GlcNAc...) asparagine glycans are attached at residues N222 and N278. 2 residues coordinate substrate: T287 and Q317. D340 acts as the Proton donor; for pectinesterase activity in catalysis. A disulfide bridge links C354 with C374. The Nucleophile; for pectinesterase activity role is filled by D361. N-linked (GlcNAc...) asparagine glycans are attached at residues N409 and N421. R429 and W431 together coordinate substrate. 3 N-linked (GlcNAc...) asparagine glycosylation sites follow: N443, N492, and N499.

It in the N-terminal section; belongs to the PMEI family. The protein in the C-terminal section; belongs to the pectinesterase family. In terms of tissue distribution, expressed in siliques.

The protein resides in the secreted. The protein localises to the cell wall. It carries out the reaction [(1-&gt;4)-alpha-D-galacturonosyl methyl ester](n) + n H2O = [(1-&gt;4)-alpha-D-galacturonosyl](n) + n methanol + n H(+). The protein operates within glycan metabolism; pectin degradation; 2-dehydro-3-deoxy-D-gluconate from pectin: step 1/5. Its function is as follows. Acts in the modification of cell walls via demethylesterification of cell wall pectin. The polypeptide is Probable pectinesterase/pectinesterase inhibitor 44 (PME44) (Arabidopsis thaliana (Mouse-ear cress)).